The following is a 418-amino-acid chain: Serine/threonine transporter SstT (418 aa).

The next 8 membrane-spanning stretches (helical) occupy residues 21 to 41 (ILIGLVAGIVLALVSTPAAIA), 49 to 69 (FVGALKAVAPVLVLMLVIASI), 83 to 103 (ILFLYVLGTFSAALVAVVVSF), 142 to 162 (ALLNANYIGILAWAVGLGIAL), 190 to 210 (FAPLGIFGLVASTIAATGFGA), 217 to 237 (LLVVLIGCMLLVALVVNPLIV), 299 to 319 (MAGAAITITVLTLAAVHTLGI), and 331 to 351 (VVAAICACGASGVAGGSLLLI).

This sequence belongs to the dicarboxylate/amino acid:cation symporter (DAACS) (TC 2.A.23) family.

Its subcellular location is the cell inner membrane. It catalyses the reaction L-serine(in) + Na(+)(in) = L-serine(out) + Na(+)(out). It carries out the reaction L-threonine(in) + Na(+)(in) = L-threonine(out) + Na(+)(out). Functionally, involved in the import of serine and threonine into the cell, with the concomitant import of sodium (symport system). This chain is Serine/threonine transporter SstT, found in Yersinia pestis bv. Antiqua (strain Antiqua).